The chain runs to 316 residues: Thymidylate synthase (316 aa).

Residues Arg23 and 178–179 (RR) contribute to the dUMP site. Cys198 acts as the Nucleophile in catalysis. DUMP is bound by residues 218-221 (RSAD), Asn229, and 259-261 (HLY). Asp221 lines the (6R)-5,10-methylene-5,6,7,8-tetrahydrofolate pocket. Ala315 is a binding site for (6R)-5,10-methylene-5,6,7,8-tetrahydrofolate.

It belongs to the thymidylate synthase family. Bacterial-type ThyA subfamily. In terms of assembly, homodimer.

It is found in the cytoplasm. It catalyses the reaction dUMP + (6R)-5,10-methylene-5,6,7,8-tetrahydrofolate = 7,8-dihydrofolate + dTMP. It functions in the pathway pyrimidine metabolism; dTTP biosynthesis. Functionally, catalyzes the reductive methylation of 2'-deoxyuridine-5'-monophosphate (dUMP) to 2'-deoxythymidine-5'-monophosphate (dTMP) while utilizing 5,10-methylenetetrahydrofolate (mTHF) as the methyl donor and reductant in the reaction, yielding dihydrofolate (DHF) as a by-product. This enzymatic reaction provides an intracellular de novo source of dTMP, an essential precursor for DNA biosynthesis. The sequence is that of Thymidylate synthase from Lacticaseibacillus paracasei (strain ATCC 334 / BCRC 17002 / CCUG 31169 / CIP 107868 / KCTC 3260 / NRRL B-441) (Lactobacillus paracasei).